A 710-amino-acid polypeptide reads, in one-letter code: Putative membrane protein IgaA homolog (710 aa).

Met1 is a topological domain (periplasmic). A helical transmembrane segment spans residues 2–22 (STILIFIAALLACSLLAIWRF). Over 23-204 (RVKSRRGSLP…YALSRPAGLR (182 aa)) the chain is Cytoplasmic. A run of 2 helical transmembrane segments spans residues 205–225 (EALL…TPDV) and 226–246 (FVPW…WGLF). Residues 247–339 (APPSKSALRE…KNFPLQHWLR (93 aa)) are Cytoplasmic-facing. A helical membrane pass occupies residues 340-360 (STVIAIGSLLVLFMLLFWIPL). The Periplasmic segment spans residues 361–656 (DMPIKFTLSW…PDKSGWWRYL (296 aa)). A helical membrane pass occupies residues 657 to 677 (GTTLLMLAMIVSAVYNGIQAF). Residues 678 to 710 (RRYQRHRTRMADIQEYYESCLNPRLTVSPENLI) are Cytoplasmic-facing.

This sequence belongs to the IgaA family.

It localises to the cell inner membrane. The sequence is that of Putative membrane protein IgaA homolog (yrfF) from Salmonella typhi.